Here is a 322-residue protein sequence, read N- to C-terminus: Olfactory receptor 1J1 (322 aa).

Topologically, residues 1-25 are extracellular; the sequence is MSPENQSSVSEFLLLGLPIRPEQQA. A glycan (N-linked (GlcNAc...) asparagine) is linked at Asn-5. The chain crosses the membrane as a helical span at residues 26–49; sequence VFFALFLGMYLTTVLGNLLIMLLI. The Cytoplasmic segment spans residues 50–57; that stretch reads QLDSHLHT. The helical transmembrane segment at 58–79 threads the bilayer; the sequence is PMYFFLSHLALTDISFSSVTVP. Over 80–100 the chain is Extracellular; sequence KMLMNMQTQHLAVFYKGCISQ. A disulfide bond links Cys-97 and Cys-189. The helical transmembrane segment at 101–120 threads the bilayer; that stretch reads TYFFIFFADLDSFLITSMAY. At 121 to 139 the chain is on the cytoplasmic side; the sequence is DRYVAICHPLHYATIMTQS. The chain crosses the membrane as a helical span at residues 140 to 158; that stretch reads QCVMLVAGSWVIACACALL. Topologically, residues 159–196 are extracellular; that stretch reads HTLLLAQLSFCADHIIPHYFCDLGALLKLSCSDTSLNQ. A helical membrane pass occupies residues 197-219; sequence LAIFTAALTAIMLPFLCILVSYG. Residues 220–236 lie on the Cytoplasmic side of the membrane; it reads HIGVTILQIPSTKGICK. The helical transmembrane segment at 237–259 threads the bilayer; it reads ALSTCGSHLSVVTIYYRTIIGLY. Topologically, residues 260–272 are extracellular; the sequence is FLPPSSNTNDKNI. The helical transmembrane segment at 273–292 threads the bilayer; that stretch reads IASVIYTAVTPMLNPFIYSL. Topologically, residues 293–322 are cytoplasmic; sequence RNKDIKGALRKLLSRSGAVAHACNLNTLGG.

The protein belongs to the G-protein coupled receptor 1 family.

The protein resides in the cell membrane. Odorant receptor. This Homo sapiens (Human) protein is Olfactory receptor 1J1.